The sequence spans 273 residues: MNTRVHQGHLARKRFGQNFLNDQFVIESIVSAINPQKGQAMVEIGPGLAALTEPVGERLDEMTVIELDRDLAARLKTHPFLGPKLTIYQQDAMTMNFAELSEKLGQPLRVFGNLPYNISTPLMFHLFSYTDAIADMHFMLQKEVVNRLVAGPNSKAYGRLSVMAQYYCQIIPVLEVPPTAFTPAPKVESAVVRLVPHAVMPHPVKELRVLSRITTEAFNQRRKTIRNSLGNTFTVDVLTELGIDPAMRAENISVEQYCKLANYISDNAPPKES.

S-adenosyl-L-methionine is bound by residues N18, L20, G45, E66, D91, and N113.

It belongs to the class I-like SAM-binding methyltransferase superfamily. rRNA adenine N(6)-methyltransferase family. RsmA subfamily.

The protein localises to the cytoplasm. The catalysed reaction is adenosine(1518)/adenosine(1519) in 16S rRNA + 4 S-adenosyl-L-methionine = N(6)-dimethyladenosine(1518)/N(6)-dimethyladenosine(1519) in 16S rRNA + 4 S-adenosyl-L-homocysteine + 4 H(+). Specifically dimethylates two adjacent adenosines (A1518 and A1519) in the loop of a conserved hairpin near the 3'-end of 16S rRNA in the 30S particle. May play a critical role in biogenesis of 30S subunits. This chain is Ribosomal RNA small subunit methyltransferase A, found in Enterobacter sp. (strain 638).